Reading from the N-terminus, the 101-residue chain is Small ribosomal subunit protein uS14A (101 aa).

The segment at 29 to 60 (EIIRSPRSTPEQRTAAQNELAHQPRDASAVRV) is disordered. Residues 34–45 (PRSTPEQRTAAQ) show a composition bias toward polar residues.

The protein belongs to the universal ribosomal protein uS14 family. As to quaternary structure, part of the 30S ribosomal subunit. Contacts proteins S3 and S10.

In terms of biological role, binds 16S rRNA, required for the assembly of 30S particles and may also be responsible for determining the conformation of the 16S rRNA at the A site. This Mycolicibacterium paratuberculosis (strain ATCC BAA-968 / K-10) (Mycobacterium paratuberculosis) protein is Small ribosomal subunit protein uS14A.